Consider the following 282-residue polypeptide: Snake venom serine protease BmSP (282 aa).

The N-terminal stretch at M1–S18 is a signal peptide. A propeptide spanning residues K19–L56 is cleaved from the precursor. 2 N-linked (GlcNAc...) asparagine glycosylation sites follow: N41 and N45. The region spanning I57 to A280 is the Peptidase S1 domain. 5 disulfide bridges follow: C63/C195, C82/C98, C174/C241, C206/C220, and C231/C256. Residue H97 is the Charge relay system of the active site. N-linked (GlcNAc...) asparagine glycosylation occurs at N135. The active-site Charge relay system is the D142. N-linked (GlcNAc...) asparagine glycans are attached at residues N149 and N153. The active-site Charge relay system is the S235.

Belongs to the peptidase S1 family. Snake venom subfamily. As to quaternary structure, monomer. Expressed by the venom gland.

It is found in the secreted. Its function is as follows. Snake venom serine protease that may act in the hemostasis system of the prey. The chain is Snake venom serine protease BmSP from Bungarus multicinctus (Many-banded krait).